The sequence spans 805 residues: Cell division cycle protein 48 homolog (805 aa).

ATP is bound by residues Gly249 to Thr256 and Gly522 to Thr529. Residues Gly783–Ser805 form a disordered region.

The protein belongs to the AAA ATPase family.

Functionally, probably functions in cell division and growth processes. This chain is Cell division cycle protein 48 homolog (CAFP), found in Capsicum annuum (Capsicum pepper).